The primary structure comprises 99 residues: DNA-directed RNA polymerase subunit omega (99 aa).

It belongs to the RNA polymerase subunit omega family. In terms of assembly, the RNAP catalytic core consists of 2 alpha, 1 beta, 1 beta' and 1 omega subunit. When a sigma factor is associated with the core the holoenzyme is formed, which can initiate transcription.

It carries out the reaction RNA(n) + a ribonucleoside 5'-triphosphate = RNA(n+1) + diphosphate. Its function is as follows. Promotes RNA polymerase assembly. Latches the N- and C-terminal regions of the beta' subunit thereby facilitating its interaction with the beta and alpha subunits. This is DNA-directed RNA polymerase subunit omega (rpoZ) from Xylella fastidiosa (strain 9a5c).